Here is a 130-residue protein sequence, read N- to C-terminus: Small ribosomal subunit protein uS8 (130 aa).

The protein belongs to the universal ribosomal protein uS8 family. In terms of assembly, part of the 30S ribosomal subunit. Contacts proteins S5 and S12.

Its function is as follows. One of the primary rRNA binding proteins, it binds directly to 16S rRNA central domain where it helps coordinate assembly of the platform of the 30S subunit. In Onion yellows phytoplasma (strain OY-M), this protein is Small ribosomal subunit protein uS8.